The sequence spans 139 residues: Actin-depolymerizing factor (139 aa).

An ADF-H domain is found at 5-139 (SSGMAVDDEC…SMDIIKARAF (135 aa)).

The protein belongs to the actin-binding proteins ADF family. Preferentially in mature anther.

Actin-depolymerizing protein. Severs actin filaments (F-actin) and binds to actin monomers. The polypeptide is Actin-depolymerizing factor (Lilium longiflorum (Trumpet lily)).